The sequence spans 443 residues: MTESEKKQQKPQKAKAEKFKALSAPKGVPDYVPPTSAEFKAVKDAFTSAAHAAGYEHVELPIFEETSLFARGVGESTDVVSKEMYTFADRGGRSVTLRPEGTAGVMRAVIEHNLDRGQLPVKLVYNGPFFRYERPQAGRYRQLQQVGVEAIGVDDPALDAEVIALAHRCFSSIGLNGFRLELTSLGDWDDRPAYRQKLQDFLATLPLDEETQRRAQLNPLRVLDDKRPEMQEMLAEAPLMLDHLSDSSREHFETVTGLLDDLGVGYTINPRMVRGLDYYTKTCFEFVHDGLGAQSGIGGGGRYDGLMAQLGGQDLSGIGFGLGVDRALLALEAEEKRASTGRRVDVYGVALGAEAKRRMVGIVDDLRERGVSADMSYGNRGLKGAMKGADRAGALYALVLGDKELAEGTVTVKDLGAHEQHEVDLAAVVELLAEKTADRTAHA.

Residues M1–K20 are compositionally biased toward basic and acidic residues. The tract at residues M1–A21 is disordered.

Belongs to the class-II aminoacyl-tRNA synthetase family. In terms of assembly, homodimer.

It localises to the cytoplasm. It catalyses the reaction tRNA(His) + L-histidine + ATP = L-histidyl-tRNA(His) + AMP + diphosphate + H(+). The polypeptide is Histidine--tRNA ligase (Corynebacterium jeikeium (strain K411)).